Consider the following 617-residue polypeptide: Vacuolar protein sorting-associated protein 33B (617 aa).

The residue at position 2 (A2) is an N-acetylalanine.

The protein belongs to the STXBP/unc-18/SEC1 family. Interacts with RAB11A and VIPAS39. Associates with adapter protein complex 3 (AP-3), clathrin:AP-3 and clathrin:HGS complexes. Post-translationally, phosphorylated on tyrosine residues.

The protein localises to the late endosome membrane. Its subcellular location is the lysosome membrane. The protein resides in the early endosome. It is found in the cytoplasmic vesicle. It localises to the clathrin-coated vesicle. The protein localises to the recycling endosome. Functionally, may play a role in vesicle-mediated protein trafficking to lysosomal compartments and in membrane docking/fusion reactions of late endosomes/lysosomes. Required for proper trafficking and targeting of the collagen-modifying enzyme lysyl hydroxylase 3 (LH3) to intracellular collagen. Mediates phagolysosomal fusion in macrophages. Proposed to be involved in endosomal maturation implicating in part VIPAS39. In epithelial cells, the VPS33B:VIPAS39 complex may play a role in the apical RAB11A-dependentrecycling pathway and in the maintenance of the apical-basolateral polarity. Seems to be involved in the sorting of specific cargos from the trans-Golgi network to alpha-granule-destined multivesicular bodies (MVBs) promoting MVBs maturation in megakaryocytes. This is Vacuolar protein sorting-associated protein 33B (Vps33b) from Mus musculus (Mouse).